We begin with the raw amino-acid sequence, 691 residues long: Dipeptidyl-peptidase 5 (691 aa).

The signal sequence occupies residues 1 to 20; sequence MKRTILSLLAAVSLAIPVYA. Catalysis depends on charge relay system residues S549, D634, and H666.

It belongs to the peptidase S9C family. As to quaternary structure, homodimer.

It is found in the periplasm. Catalyzes the removal of dipeptides from the N-terminus of oligopeptides. Prefers Ala and hydrophobic residues at the P1 position, and has no preference for P2 residues. Shows the highest dipeptidyl peptidase activity toward the synthetic substrate Lys-Ala-methylcoumaryl-7-amide (Lys-Ala-MCA). Is likely involved in amino acid metabolism and bacterial growth/survival of asaccharolytic P.endodontalis, that utilizes amino acids from extracellular proteinaceous nutrients as energy and carbon sources. The sequence is that of Dipeptidyl-peptidase 5 from Porphyromonas endodontalis (strain ATCC 35406 / DSM 24491 / JCM 8526 / CCUG 16442 / BCRC 14492 / NCTC 13058 / HG 370) (Bacteroides endodontalis).